Reading from the N-terminus, the 233-residue chain is Octanoyltransferase (233 aa).

Residues 36 to 211 (DTTPDEIWLV…EFTRQLGYPT (176 aa)) form the BPL/LPL catalytic domain. Substrate contacts are provided by residues 75–82 (RGGQVTYH), 142–144 (SLG), and 155–157 (GLA). Catalysis depends on cysteine 173, which acts as the Acyl-thioester intermediate.

This sequence belongs to the LipB family.

The protein resides in the cytoplasm. The catalysed reaction is octanoyl-[ACP] + L-lysyl-[protein] = N(6)-octanoyl-L-lysyl-[protein] + holo-[ACP] + H(+). The protein operates within protein modification; protein lipoylation via endogenous pathway; protein N(6)-(lipoyl)lysine from octanoyl-[acyl-carrier-protein]: step 1/2. In terms of biological role, catalyzes the transfer of endogenously produced octanoic acid from octanoyl-acyl-carrier-protein onto the lipoyl domains of lipoate-dependent enzymes. Lipoyl-ACP can also act as a substrate although octanoyl-ACP is likely to be the physiological substrate. This is Octanoyltransferase from Yersinia pseudotuberculosis serotype O:3 (strain YPIII).